A 157-amino-acid polypeptide reads, in one-letter code: Alpha-amylase/trypsin inhibitor RA16 (157 aa).

The N-terminal stretch at 1–26 (MASNKVVISALLVVVVSVLAATTTMA) is a signal peptide. 5 disulfide bridges follow: cysteine 41–cysteine 89, cysteine 55–cysteine 77, cysteine 63–cysteine 121, cysteine 78–cysteine 137, and cysteine 91–cysteine 149.

Belongs to the cereal trypsin/alpha-amylase inhibitor family. Post-translationally, five disulfide bonds are present.

It is found in the secreted. Functionally, seed storage protein. This chain is Alpha-amylase/trypsin inhibitor RA16, found in Oryza sativa subsp. japonica (Rice).